A 237-amino-acid polypeptide reads, in one-letter code: 1-(5-phosphoribosyl)-5-[(5-phosphoribosylamino)methylideneamino] imidazole-4-carboxamide isomerase (237 aa).

Residue aspartate 8 is the Proton acceptor of the active site. Aspartate 129 functions as the Proton donor in the catalytic mechanism.

Belongs to the HisA/HisF family.

The protein localises to the cytoplasm. The enzyme catalyses 1-(5-phospho-beta-D-ribosyl)-5-[(5-phospho-beta-D-ribosylamino)methylideneamino]imidazole-4-carboxamide = 5-[(5-phospho-1-deoxy-D-ribulos-1-ylimino)methylamino]-1-(5-phospho-beta-D-ribosyl)imidazole-4-carboxamide. Its pathway is amino-acid biosynthesis; L-histidine biosynthesis; L-histidine from 5-phospho-alpha-D-ribose 1-diphosphate: step 4/9. The chain is 1-(5-phosphoribosyl)-5-[(5-phosphoribosylamino)methylideneamino] imidazole-4-carboxamide isomerase from Alkaliphilus metalliredigens (strain QYMF).